Reading from the N-terminus, the 456-residue chain is tRNA modification GTPase MnmE (456 aa).

(6S)-5-formyl-5,6,7,8-tetrahydrofolate-binding residues include Arg24, Glu81, and Lys120. In terms of domain architecture, TrmE-type G spans 216–379 (GMTVVIAGRP…LRDHLKACMG (164 aa)). Asn226 lines the K(+) pocket. GTP is bound by residues 226 to 231 (NAGKSS), 245 to 251 (TDIAGTT), 270 to 273 (DTAG), 335 to 338 (NKAD), and 359 to 361 (SAR). Ser230 is a Mg(2+) binding site. Positions 245, 247, and 250 each coordinate K(+). Thr251 serves as a coordination point for Mg(2+). Lys456 is a (6S)-5-formyl-5,6,7,8-tetrahydrofolate binding site.

It belongs to the TRAFAC class TrmE-Era-EngA-EngB-Septin-like GTPase superfamily. TrmE GTPase family. As to quaternary structure, homodimer. Heterotetramer of two MnmE and two MnmG subunits. The cofactor is K(+).

Its subcellular location is the cytoplasm. In terms of biological role, exhibits a very high intrinsic GTPase hydrolysis rate. Involved in the addition of a carboxymethylaminomethyl (cmnm) group at the wobble position (U34) of certain tRNAs, forming tRNA-cmnm(5)s(2)U34. The sequence is that of tRNA modification GTPase MnmE from Pseudomonas entomophila (strain L48).